Consider the following 158-residue polypeptide: Low molecular weight phosphotyrosine protein phosphatase (158 aa).

The residue at position 2 (A2) is an N-acetylalanine. The active-site Nucleophile is C13. The active site involves R19. D130 (proton donor) is an active-site residue. Y132 and Y133 each carry phosphotyrosine.

Belongs to the low molecular weight phosphotyrosine protein phosphatase family. As to quaternary structure, interacts with EPHA2; dephosphorylates EPHA2. Interacts with EPHB1. Interacts with the SH3 domain of SPTAN1. In terms of processing, phosphorylated by LCK. Phosphorylation at Tyr-132 increases its phosphatase activity.

Its subcellular location is the cytoplasm. The catalysed reaction is O-phospho-L-tyrosyl-[protein] + H2O = L-tyrosyl-[protein] + phosphate. It carries out the reaction a phosphate monoester + H2O = an alcohol + phosphate. Inhibited by sulfhydryl reagents. Functionally, acts on tyrosine phosphorylated proteins, low-MW aryl phosphates and natural and synthetic acyl phosphates with differences in substrate specificity between isoform 1 and isoform 2. This is Low molecular weight phosphotyrosine protein phosphatase (ACP1) from Pongo abelii (Sumatran orangutan).